Reading from the N-terminus, the 238-residue chain is Ribonuclease 3 (238 aa).

The RNase III domain occupies 11–136 (RARLEAAIGY…LIAAIYLDGG (126 aa)). E49 contacts Mg(2+). D53 is a catalytic residue. The Mg(2+) site is built by D122 and E125. Residue E125 is part of the active site. Residues 161–230 (DAKTELQEWA…AMKLLEREGV (70 aa)) form the DRBM domain. The span at 180 to 193 (YRTEDRSGPDHDPR) shows a compositional bias: basic and acidic residues. The interval 180 to 215 (YRTEDRSGPDHDPRFTVTVEVDGIDPETGVDRSKRG) is disordered.

It belongs to the ribonuclease III family. Homodimer. The cofactor is Mg(2+).

It is found in the cytoplasm. The enzyme catalyses Endonucleolytic cleavage to 5'-phosphomonoester.. Functionally, digests double-stranded RNA. Involved in the processing of primary rRNA transcript to yield the immediate precursors to the large and small rRNAs (23S and 16S). Processes some mRNAs, and tRNAs when they are encoded in the rRNA operon. Processes pre-crRNA and tracrRNA of type II CRISPR loci if present in the organism. This is Ribonuclease 3 from Sinorhizobium medicae (strain WSM419) (Ensifer medicae).